A 320-amino-acid polypeptide reads, in one-letter code: Malate dehydrogenase (320 aa).

NAD(+) contacts are provided by residues 10–15 (GAGQIG) and aspartate 34. Arginine 83 and arginine 89 together coordinate substrate. NAD(+) is bound by residues asparagine 96 and 119 to 121 (ITN). The substrate site is built by asparagine 121 and arginine 152. Histidine 176 (proton acceptor) is an active-site residue.

It belongs to the LDH/MDH superfamily. MDH type 3 family.

It catalyses the reaction (S)-malate + NAD(+) = oxaloacetate + NADH + H(+). Catalyzes the reversible oxidation of malate to oxaloacetate. The polypeptide is Malate dehydrogenase (Methylorubrum populi (strain ATCC BAA-705 / NCIMB 13946 / BJ001) (Methylobacterium populi)).